The chain runs to 321 residues: Biotin synthase (321 aa).

One can recognise a Radical SAM core domain in the interval 45–271 (YYGKKVKLNM…INPTKEIRIA (227 aa)). The [4Fe-4S] cluster site is built by cysteine 63, cysteine 67, and cysteine 70. Cysteine 106, cysteine 139, cysteine 199, and arginine 269 together coordinate [2Fe-2S] cluster.

This sequence belongs to the radical SAM superfamily. Biotin synthase family. Homodimer. [4Fe-4S] cluster is required as a cofactor. [2Fe-2S] cluster serves as cofactor.

It catalyses the reaction (4R,5S)-dethiobiotin + (sulfur carrier)-SH + 2 reduced [2Fe-2S]-[ferredoxin] + 2 S-adenosyl-L-methionine = (sulfur carrier)-H + biotin + 2 5'-deoxyadenosine + 2 L-methionine + 2 oxidized [2Fe-2S]-[ferredoxin]. It functions in the pathway cofactor biosynthesis; biotin biosynthesis; biotin from 7,8-diaminononanoate: step 2/2. Functionally, catalyzes the conversion of dethiobiotin (DTB) to biotin by the insertion of a sulfur atom into dethiobiotin via a radical-based mechanism. In Staphylococcus epidermidis (strain ATCC 35984 / DSM 28319 / BCRC 17069 / CCUG 31568 / BM 3577 / RP62A), this protein is Biotin synthase.